An 817-amino-acid polypeptide reads, in one-letter code: DNA gyrase subunit A (817 aa).

Residues 39-505 (LPDARDGLKP…AVEDVSIEDL (467 aa)) enclose the Topo IIA-type catalytic domain. The O-(5'-phospho-DNA)-tyrosine intermediate role is filled by Tyr127. The GyrA-box signature appears at 532-538 (QGRGGKG).

Belongs to the type II topoisomerase GyrA/ParC subunit family. In terms of assembly, heterotetramer, composed of two GyrA and two GyrB chains. In the heterotetramer, GyrA contains the active site tyrosine that forms a transient covalent intermediate with DNA, while GyrB binds cofactors and catalyzes ATP hydrolysis.

The protein localises to the cytoplasm. The enzyme catalyses ATP-dependent breakage, passage and rejoining of double-stranded DNA.. A type II topoisomerase that negatively supercoils closed circular double-stranded (ds) DNA in an ATP-dependent manner to modulate DNA topology and maintain chromosomes in an underwound state. Negative supercoiling favors strand separation, and DNA replication, transcription, recombination and repair, all of which involve strand separation. Also able to catalyze the interconversion of other topological isomers of dsDNA rings, including catenanes and knotted rings. Type II topoisomerases break and join 2 DNA strands simultaneously in an ATP-dependent manner. The polypeptide is DNA gyrase subunit A (Aminobacterium colombiense (strain DSM 12261 / ALA-1)).